A 114-amino-acid chain; its full sequence is Large ribosomal subunit protein bL20 (114 aa).

Belongs to the bacterial ribosomal protein bL20 family.

Functionally, binds directly to 23S ribosomal RNA and is necessary for the in vitro assembly process of the 50S ribosomal subunit. It is not involved in the protein synthesizing functions of that subunit. This chain is Large ribosomal subunit protein bL20, found in Anaeromyxobacter dehalogenans (strain 2CP-C).